Reading from the N-terminus, the 917-residue chain is von Willebrand factor A domain-containing protein DDB_G0285975 (917 aa).

A disordered region spans residues 12-51 (DTTTTTTPTTPTTPTTPTTTPTTTTTPTTTPTTTTTSTTP). The span at 13 to 51 (TTTTTTPTTPTTPTTPTTTPTTTTTPTTTPTTTTTSTTP) shows a compositional bias: low complexity. The 129-residue stretch at 87–215 (RYNTGLKNIS…NVTIHLTIIS (129 aa)) folds into the VIT domain. Residues 339–507 (EFIFLIDCSG…NFEEQVMKLV (169 aa)) form the VWFA domain. In terms of domain architecture, t-SNARE coiled-coil homology spans 679–741 (LFSSENRNQT…INSIPQKSNI (63 aa)). Low complexity-rich tracts occupy residues 751–760 (SPSEVSTSKS) and 774–818 (NNNN…NNNN). A disordered region spans residues 751–822 (SPSEVSTSKS…NNNNNNSDNS (72 aa)).

In Dictyostelium discoideum (Social amoeba), this protein is von Willebrand factor A domain-containing protein DDB_G0285975.